The following is a 254-amino-acid chain: METHHPGAFLLPSYSEMKSSGCQFPTHTPFHKLNPSVLGCHLPSGTPHCISDILSRPLPASHSGMFPGYPTVQGYGSSSVPGTCYGEQGNILTKSGTPYTNQSQGGWTDIEQDWRGGNPALSSASNTEGSSRKKHTRPTFTGHQIFALEKTFEQTKYLAGPERARLAFSLGMSESQVKVWFQNRRTKWRKKSAVETPGLPSLSTRAPGDLIPSDNEDDEYSKPLDPDSDDEKIRLLLRKHRAAFSVLSLASHNL.

2 disordered regions span residues 112-140 and 191-228; these read QDWR…RPTF and KSAV…DPDS. Residues 120–129 are compositionally biased toward polar residues; it reads ALSSASNTEG. The homeobox DNA-binding region spans 133-192; the sequence is KKHTRPTFTGHQIFALEKTFEQTKYLAGPERARLAFSLGMSESQVKVWFQNRRTKWRKKS.

It localises to the nucleus. Putative transcription factor, which may be involved in patterning of central nervous system and pancreas. The protein is Homeobox protein Nkx-6.3 (nkx6-3) of Xenopus laevis (African clawed frog).